The primary structure comprises 1253 residues: Myosin-1 (1253 aa).

The segment at methionine 1–alanine 40 is disordered. One can recognise a Myosin motor domain in the interval isoleucine 50–aspartate 729. Glycine 143–threonine 150 contributes to the ATP binding site. Serine 371 carries the post-translational modification Phosphoserine. The segment at serine 418–alanine 500 is actin-binding. IQ domains lie at histidine 733 to cysteine 753 and alanine 754 to glutamine 779. The TH1 domain maps to arginine 787 to alanine 977. Disordered regions lie at residues threonine 959–proline 1083 and glutamine 1139–tryptophan 1253. Positions proline 1029–alanine 1055 are enriched in low complexity. Pro residues-rich tracts occupy residues alanine 1068 to lysine 1081 and alanine 1143 to alanine 1155. An SH3 domain is found at proline 1080 to alanine 1141. 2 stretches are compositionally biased toward low complexity: residues proline 1156–lysine 1173 and asparagine 1221–alanine 1235.

The protein belongs to the TRAFAC class myosin-kinesin ATPase superfamily. Myosin family. Phosphorylation of the TEDS site (Ser-371) is required for the polarization of the actin cytoskeleton. Phosphorylation probably activates the myosin-I ATPase activity.

The protein localises to the cytoplasm. It is found in the cytoskeleton. The protein resides in the actin patch. In terms of biological role, type-I myosin implicated in the organization of the actin cytoskeleton. Required for proper actin cytoskeleton polarization. At the cell cortex, assembles in patch-like structures together with proteins from the actin-polymerizing machinery and promotes actin assembly. Functions as actin nucleation-promoting factor (NPF) for the Arp2/3 complex. Plays an important role in polarized growth, spore germination, hyphal morphogenesis, and septal wall formation. In Aspergillus clavatus (strain ATCC 1007 / CBS 513.65 / DSM 816 / NCTC 3887 / NRRL 1 / QM 1276 / 107), this protein is Myosin-1 (myoA).